The primary structure comprises 544 residues: MAKDIKFSEEARRSMLRGVDTLANAVKVTLGPKGRNVVLEKKFGSPLITNDGVTIAKEIELEDAFENMGAKLVAEVASKTNDVAGDGTTTATVLAQAMIREGLKNVTAGANPMGLRKGIEKAVTAAIEELKTISKPIEGKSSIAQVAAISAADEEVGQLIAEAMERVGNDGVITLEESKGFTTELDVVEGMQFDRGYASPYMITDSDKMEAVLDNPYILITDKKISNIQEILPVLEQVVQQGKPLLIIAEDVEGEALATLVVNKLRGTFNVVAVKAPGFGDRRKAMLEDIAILTGGEVITEELGRDLKSATVESLGRAGKVVVTKENTTVVEGIGNTQQIEARIGQIRAQLEETTSEFDREKLQERLAKLAGGVAVIKVGAATETELKERKLRIEDALNSTRAAVEEGIVAGGGTSLMNVYTKVASIVAEGDEATGINIVLRALEEPVRQIAINAGLEGSVVVERLKGEKVGVGFNAATGEWVNMLETGIVDPAKVTRSALQNAASVAAMFLTTEAVVADKPEPNAPAMPDMGGMGMGGMGGMM.

Residues 29–32 (TLGP), 86–90 (DGTTT), G413, 476–478 (NAA), and D492 contribute to the ATP site.

It belongs to the chaperonin (HSP60) family. As to quaternary structure, forms a cylinder of 14 subunits composed of two heptameric rings stacked back-to-back. Interacts with the co-chaperonin GroES.

It is found in the cytoplasm. The enzyme catalyses ATP + H2O + a folded polypeptide = ADP + phosphate + an unfolded polypeptide.. Functionally, together with its co-chaperonin GroES, plays an essential role in assisting protein folding. The GroEL-GroES system forms a nano-cage that allows encapsulation of the non-native substrate proteins and provides a physical environment optimized to promote and accelerate protein folding. This is Chaperonin GroEL from Bacillus cereus.